Consider the following 297-residue polypeptide: Hydroxysqualene synthase (297 aa).

It belongs to the phytoene/squalene synthase family. HpnC subfamily.

It catalyses the reaction presqualene diphosphate + H2O = hydroxysqualene + diphosphate. The protein operates within secondary metabolite biosynthesis; hopanoid biosynthesis. Functionally, involved in the biosynthesis of the hopanoid precursor squalene (SQ) from farnesyl diphosphate (FPP). Catalyzes the second step, the conversion of presqualene diphosphate (PSPP) to hydroxysqualene (HSQ). This chain is Hydroxysqualene synthase, found in Zymomonas mobilis subsp. mobilis (strain ATCC 31821 / ZM4 / CP4).